Here is a 579-residue protein sequence, read N- to C-terminus: DNA ligase 1 (579 aa).

Glu-244 serves as a coordination point for ATP. Lys-246 (N6-AMP-lysine intermediate) is an active-site residue. ATP is bound by residues Arg-251, Arg-266, Glu-296, Phe-342, Arg-419, and Lys-425.

Belongs to the ATP-dependent DNA ligase family. The cofactor is Mg(2+).

The catalysed reaction is ATP + (deoxyribonucleotide)n-3'-hydroxyl + 5'-phospho-(deoxyribonucleotide)m = (deoxyribonucleotide)n+m + AMP + diphosphate.. Its function is as follows. DNA ligase that seals nicks in double-stranded DNA during DNA replication, DNA recombination and DNA repair. This Methanosarcina mazei (strain ATCC BAA-159 / DSM 3647 / Goe1 / Go1 / JCM 11833 / OCM 88) (Methanosarcina frisia) protein is DNA ligase 1.